A 308-amino-acid polypeptide reads, in one-letter code: MKTVPAMLVTPRSFREFFILLLGLWSILCKEPTKRIGEECRVQLKIKRNSSRSAWTGELFKIECPVTYCVHRPNVTWCKHNGTRCVPLEVGPQLHTSWVENDQASAFVLYFEPIHLSDDGVYTCSANLNSEVINSHSVVIHVTERTQNCSEHPLITASDIPDATNASRPSTMEERPGRTWLLYALLPLGTSLLLLACVCLLCFLRRIQGKEKKPSDLAGRERETNLVDIPVSSRTNSQILTSETGIYDNDPWSSRLGESESTISSQLEGNKQGIVYASLNHCVIGRTPRQASKIQEAPTEYASICVRS.

The N-terminal stretch at 1–29 (MKTVPAMLVTPRSFREFFILLLGLWSILC) is a signal peptide. The Extracellular segment spans residues 30–183 (KEPTKRIGEE…ERPGRTWLLY (154 aa)). Residues 32–134 (PTKRIGEECR…SANLNSEVIN (103 aa)) form the Ig-like V-type domain. Intrachain disulfides connect Cys40-Cys69, Cys64-Cys124, and Cys78-Cys85. N-linked (GlcNAc...) asparagine glycans are attached at residues Asn49, Asn74, Asn81, Asn148, and Asn165. A helical transmembrane segment spans residues 184–204 (ALLPLGTSLLLLACVCLLCFL). Residues 205–308 (RRIQGKEKKP…TEYASICVRS (104 aa)) are Cytoplasmic-facing.

As to quaternary structure, interacts with tyrosine phosphatases PTPN6/SHP-1 and PTPN11/SHP-2. Interacts with TNFRSF14/HVEM (via cysteine-rich domain 1). Phosphorylated on Tyr residues by TNFRSF14 and by antigen receptors cross-linking, both inducing association with PTPN6 and PTPN11. Post-translationally, N-glycosylated.

Its subcellular location is the cell membrane. Inhibitory receptor on lymphocytes that negatively regulates antigen receptor signaling via PTPN6/SHP-1 and PTPN11/SHP-2. May interact in cis (on the same cell) or in trans (on other cells) with TNFRSF14. In cis interactions, appears to play an immune regulatory role inhibiting in trans interactions in naive T cells to maintain a resting state. In trans interactions, can predominate during adaptive immune response to provide survival signals to effector T cells. In Rattus norvegicus (Rat), this protein is B- and T-lymphocyte attenuator.